The chain runs to 345 residues: Holliday junction branch migration complex subunit RuvB (345 aa).

A large ATPase domain (RuvB-L) region spans residues 1 to 182 (MDQRIIASSS…FGIVQRLEFY (182 aa)). Residues I21, R22, G63, K66, T67, T68, 129 to 131 (EDF), R172, Y182, and R219 contribute to the ATP site. T67 contacts Mg(2+). A small ATPAse domain (RuvB-S) region spans residues 183 to 253 (SPQELTRIVI…VAQAAMQMLK (71 aa)). The interval 256–345 (PEGFDELDRR…PGIGEPGDLF (90 aa)) is head domain (RuvB-H). Residues R292, R311, and R316 each contribute to the DNA site.

It belongs to the RuvB family. Homohexamer. Forms an RuvA(8)-RuvB(12)-Holliday junction (HJ) complex. HJ DNA is sandwiched between 2 RuvA tetramers; dsDNA enters through RuvA and exits via RuvB. An RuvB hexamer assembles on each DNA strand where it exits the tetramer. Each RuvB hexamer is contacted by two RuvA subunits (via domain III) on 2 adjacent RuvB subunits; this complex drives branch migration. In the full resolvosome a probable DNA-RuvA(4)-RuvB(12)-RuvC(2) complex forms which resolves the HJ.

It localises to the cytoplasm. It carries out the reaction ATP + H2O = ADP + phosphate + H(+). The RuvA-RuvB-RuvC complex processes Holliday junction (HJ) DNA during genetic recombination and DNA repair, while the RuvA-RuvB complex plays an important role in the rescue of blocked DNA replication forks via replication fork reversal (RFR). RuvA specifically binds to HJ cruciform DNA, conferring on it an open structure. The RuvB hexamer acts as an ATP-dependent pump, pulling dsDNA into and through the RuvAB complex. RuvB forms 2 homohexamers on either side of HJ DNA bound by 1 or 2 RuvA tetramers; 4 subunits per hexamer contact DNA at a time. Coordinated motions by a converter formed by DNA-disengaged RuvB subunits stimulates ATP hydrolysis and nucleotide exchange. Immobilization of the converter enables RuvB to convert the ATP-contained energy into a lever motion, pulling 2 nucleotides of DNA out of the RuvA tetramer per ATP hydrolyzed, thus driving DNA branch migration. The RuvB motors rotate together with the DNA substrate, which together with the progressing nucleotide cycle form the mechanistic basis for DNA recombination by continuous HJ branch migration. Branch migration allows RuvC to scan DNA until it finds its consensus sequence, where it cleaves and resolves cruciform DNA. The protein is Holliday junction branch migration complex subunit RuvB of Xanthomonas oryzae pv. oryzae (strain MAFF 311018).